Consider the following 458-residue polypeptide: Maturase-like protein 1 (458 aa).

The protein to group II intron maturases.

It localises to the plastid. The protein localises to the chloroplast. Could be required for group III intron excision. This Euglena gracilis protein is Maturase-like protein 1 (mat1).